A 382-amino-acid polypeptide reads, in one-letter code: Glutaminyl-peptide cyclotransferase-like protein (382 aa).

The helical transmembrane segment at 35-55 (LLPLLLALAVGSAFYTIWSGW) threads the bilayer. Cysteine 167 and cysteine 191 are oxidised to a cystine. Aspartate 186 contributes to the Zn(2+) binding site. The Proton acceptor role is filled by glutamate 225. Glutamate 226 serves as a coordination point for Zn(2+). The Proton acceptor role is filled by aspartate 269. Histidine 351 lines the Zn(2+) pocket.

Belongs to the glutaminyl-peptide cyclotransferase family.

The protein resides in the golgi apparatus membrane. It catalyses the reaction N-terminal L-glutaminyl-[peptide] = N-terminal 5-oxo-L-prolyl-[peptide] + NH4(+). In terms of biological role, responsible for the biosynthesis of pyroglutamyl peptides. The chain is Glutaminyl-peptide cyclotransferase-like protein (QPCTL) from Macaca fascicularis (Crab-eating macaque).